A 900-amino-acid chain; its full sequence is MQTHEIRKRFLDHFVKAGHTEVPSASVILDDPNLLFVNAGMVQFVPYFLGARTPPYPTATSIQKCIRTPDIDEVGITTRHNTFFQMAGNFSFGDYFKREAIELAWTLLTGSVEQGGYGLDPERIWTTVYFDDDEAVRLWQEIAGLPAERIQRRGMEDNYWSMGIPGPCGPSSEIYYDRGEEFGVGGGPIANEDRYVELWNLVFMQSERGEGTSKTDFEILGPLPRKNIDTGMGVERVAFVLQGVHNVYETDLLRPVIDAVAARAPRPYDAGNHDDDVRYRIIADHSRTAAILIGDGVTPGNDGRGYVLRRLLRRVIRSARLLDIEGPIVGDLMATVRDAMGPSYPELVTDFDRIARIAVAEETAFNRTLAAGSKLFDEVASTTKATGAKSISGSDAFTLHDTYGFPIELTLEMASEAGLQVDEVGFRELMAEQRRRAKADAAARKHAHADLTAYRELVDAGPTEFTGFDELSSEARILGIFVDGKRVPVVTHGGDGADRVELVLDRTPLYAESGGQIADEGTISGTGAGESARAAVTDVQKIAKTLWVHRVNVESGEFVEGDTVIAAVDPQWRRGATQGHSGTHMVHAALRQVLGPNAVQAGSLNRPGYLRFDFNWQGPLTEEQRTQIEEVTNQAVQADFEVHTFTEQLEKAKAMGAIALFGESYPEQVRVVEIGGPFSLELCGGTHVHNSAQIGPVTILGESSVGSGVRRVEAYVGLDSFRHLAKERALMAGLASSLKVPSEEVPARVANLVERLRAAEKELERMRLASARAAAGNAAAGAERIGNVRVVAQRMSGGMTAADLRSLVGDIRGKLGSDPAVVALIAEGEGGSVPYAVAANPAAQDLGIRANDLVKQLAAPVDGRGGGKADLAQGSGKDPAGIDAALDAVRSEIAAIARVG.

Positions 580, 584, 683, and 687 each coordinate Zn(2+).

The protein belongs to the class-II aminoacyl-tRNA synthetase family. Zn(2+) is required as a cofactor.

The protein resides in the cytoplasm. The catalysed reaction is tRNA(Ala) + L-alanine + ATP = L-alanyl-tRNA(Ala) + AMP + diphosphate. Its function is as follows. Catalyzes the attachment of alanine to tRNA(Ala) in a two-step reaction: alanine is first activated by ATP to form Ala-AMP and then transferred to the acceptor end of tRNA(Ala). Also edits incorrectly charged Ser-tRNA(Ala) and Gly-tRNA(Ala) via its editing domain. This Mycolicibacterium paratuberculosis (strain ATCC BAA-968 / K-10) (Mycobacterium paratuberculosis) protein is Alanine--tRNA ligase.